A 107-amino-acid chain; its full sequence is MMKVLVVVALLVTLISYSSSEGIDDLEADELLSLMANEQTRKECISKHHECTSNKHGCCRGNFFKYKCQCTTVVTQDGEQTERCFCGTPPHHKAAELVVGFGKKIFG.

An N-terminal signal peptide occupies residues 1–20 (MMKVLVVVALLVTLISYSSS). A propeptide spanning residues 21 to 41 (EGIDDLEADELLSLMANEQTR) is cleaved from the precursor. 4 disulfides stabilise this stretch: Cys-44–Cys-59, Cys-51–Cys-68, Cys-58–Cys-86, and Cys-70–Cys-84.

The protein belongs to the neurotoxin 19 (CSTX) family. 04 (U1-Lctx) subfamily. Expressed by the venom gland.

It localises to the secreted. The protein is U1-lycotoxin-Ls1i of Lycosa singoriensis (Wolf spider).